A 181-amino-acid polypeptide reads, in one-letter code: ATP synthase subunit delta (181 aa).

This sequence belongs to the ATPase delta chain family. In terms of assembly, F-type ATPases have 2 components, F(1) - the catalytic core - and F(0) - the membrane proton channel. F(1) has five subunits: alpha(3), beta(3), gamma(1), delta(1), epsilon(1). F(0) has three main subunits: a(1), b(2) and c(10-14). The alpha and beta chains form an alternating ring which encloses part of the gamma chain. F(1) is attached to F(0) by a central stalk formed by the gamma and epsilon chains, while a peripheral stalk is formed by the delta and b chains.

The protein resides in the cell inner membrane. Functionally, f(1)F(0) ATP synthase produces ATP from ADP in the presence of a proton or sodium gradient. F-type ATPases consist of two structural domains, F(1) containing the extramembraneous catalytic core and F(0) containing the membrane proton channel, linked together by a central stalk and a peripheral stalk. During catalysis, ATP synthesis in the catalytic domain of F(1) is coupled via a rotary mechanism of the central stalk subunits to proton translocation. In terms of biological role, this protein is part of the stalk that links CF(0) to CF(1). It either transmits conformational changes from CF(0) to CF(1) or is implicated in proton conduction. This chain is ATP synthase subunit delta, found in Cupriavidus taiwanensis (strain DSM 17343 / BCRC 17206 / CCUG 44338 / CIP 107171 / LMG 19424 / R1) (Ralstonia taiwanensis (strain LMG 19424)).